We begin with the raw amino-acid sequence, 648 residues long: Probable ATP-dependent RNA helicase DDX43 (648 aa).

A disordered region spans residues 1 to 60 (MSHHGGAPKASTWVVASRRSSTVSRAPERRPAEELNRTGPEGYSVGRGGRWRGTSRPPEA). Residues 10 to 25 (ASTWVVASRRSSTVSR) are compositionally biased toward low complexity. Over residues 26-36 (APERRPAEELN) the composition is skewed to basic and acidic residues. The 62-residue stretch at 67-128 (ELPLCFALKS…AMQTKAKAVI (62 aa)) folds into the KH domain. The short motif at 242–270 (TFDDAFQCYPEVMENIKKAGFQKPTPIQS) is the Q motif element. One can recognise a Helicase ATP-binding domain in the interval 273-448 (WPIVLQGIDL…QSYLKEPMIV (176 aa)). Residue 286-293 (AQTGTGKT) participates in ATP binding. The DEAD box motif lies at 396 to 399 (DEAD). Residues 460 to 621 (SVKQNIIVTT…SIPEELVSMA (162 aa)) form the Helicase C-terminal domain. The segment covering 628-641 (QQKREMERKMERPQ) has biased composition (basic and acidic residues). The interval 628–648 (QQKREMERKMERPQGRPKKFH) is disordered.

Belongs to the DEAD box helicase family. Expressed in testis. Expressed in many tumors of various histological types at a level that is 100-fold higher than the level observed in normal tissues except testis.

The enzyme catalyses ATP + H2O = ADP + phosphate + H(+). The polypeptide is Probable ATP-dependent RNA helicase DDX43 (DDX43) (Homo sapiens (Human)).